The sequence spans 107 residues: Ornithine carbamoyltransferase, catabolic (107 aa).

Residues 57–61 (STRTR) and Gln84 contribute to the carbamoyl phosphate site.

Belongs to the aspartate/ornithine carbamoyltransferase superfamily. OTCase family.

The protein localises to the cytoplasm. The enzyme catalyses carbamoyl phosphate + L-ornithine = L-citrulline + phosphate + H(+). It functions in the pathway amino-acid degradation; L-arginine degradation via ADI pathway; carbamoyl phosphate from L-arginine: step 2/2. This chain is Ornithine carbamoyltransferase, catabolic (arcB), found in Streptococcus pyogenes.